A 100-amino-acid polypeptide reads, in one-letter code: Large ribosomal subunit protein bL21 (100 aa).

This sequence belongs to the bacterial ribosomal protein bL21 family. Part of the 50S ribosomal subunit. Contacts protein L20.

Its function is as follows. This protein binds to 23S rRNA in the presence of protein L20. This Corynebacterium jeikeium (strain K411) protein is Large ribosomal subunit protein bL21.